The chain runs to 466 residues: MRVITRFAPSPTGSLHLGGARTALFNWLFARRHGGQFLLRMEDTDQERSSETVAQSIIEDMAWLGLHHDQDVVIQSARRERHTQVAEELLARGKAYYCYCSEDDIAAEKLRHENEGKHYRHHCPSRDANHAQSGTAGVLRLKSPENREIKFTDGVYGEISVSSEQIDDMVILRSNGHPTYLLAVVVDDHDMCITHIIRGSDHITNTIKQMLLAEAMGWDNPQFCHIPLIHDEGGAKLSKRNRAPGVHEYRELGFLPEAVCNYLLRMGWSHKDEEIITMQSATQLFSIEKIGTSHSCLDSKKLLFLNHHYMNQKTELEILGLLLPFLEQELGHTVAETKLARLSLGVKKLMERAKTLADLARDSVFYVQNIPISVDDDAKQVILKSSELLAKLVGAMSQIEPKTWTKDFLSSYIKEWTKSNDVVISDVYHLLRAAIAGRLSTPSISEVMEILGQEECISRLRFFLNS.

The 'HIGH' region signature appears at 9–19 (PSPTGSLHLGG). Positions 236–240 (KLSKR) match the 'KMSKS' region motif. K239 serves as a coordination point for ATP.

The protein belongs to the class-I aminoacyl-tRNA synthetase family. Glutamate--tRNA ligase type 1 subfamily. Monomer.

It is found in the cytoplasm. It carries out the reaction tRNA(Glu) + L-glutamate + ATP = L-glutamyl-tRNA(Glu) + AMP + diphosphate. Catalyzes the attachment of glutamate to tRNA(Glu) in a two-step reaction: glutamate is first activated by ATP to form Glu-AMP and then transferred to the acceptor end of tRNA(Glu). This Anaplasma marginale (strain St. Maries) protein is Glutamate--tRNA ligase 2.